The following is a 275-amino-acid chain: Ciliary microtubule inner protein 2B (275 aa).

Disordered regions lie at residues Pro-62–Glu-84 and Glu-125–Ser-169. 2 stretches are compositionally biased toward basic and acidic residues: residues Glu-71–Glu-84 and Glu-125–Val-147.

It belongs to the CIMIP2 family. In terms of assembly, microtubule inner protein component of sperm flagellar doublet microtubules. As to expression, expressed in airway epithelial cells.

The protein localises to the cytoplasm. Its subcellular location is the cytoskeleton. The protein resides in the cilium axoneme. It is found in the flagellum axoneme. In terms of biological role, microtubule inner protein (MIP) part of the dynein-decorated doublet microtubules (DMTs) in cilia axoneme, which is required for motile cilia beating. The protein is Ciliary microtubule inner protein 2B of Homo sapiens (Human).